A 260-amino-acid polypeptide reads, in one-letter code: Indole-3-glycerol phosphate synthase (260 aa).

It belongs to the TrpC family.

The enzyme catalyses 1-(2-carboxyphenylamino)-1-deoxy-D-ribulose 5-phosphate + H(+) = (1S,2R)-1-C-(indol-3-yl)glycerol 3-phosphate + CO2 + H2O. It participates in amino-acid biosynthesis; L-tryptophan biosynthesis; L-tryptophan from chorismate: step 4/5. In Neisseria meningitidis serogroup C / serotype 2a (strain ATCC 700532 / DSM 15464 / FAM18), this protein is Indole-3-glycerol phosphate synthase.